The following is a 416-amino-acid chain: MNKQSWLLNLSLLKTHPAFRAVFLARFISIVSLGLLGVAVPVQIQMMTHSTWQVGLSVTLTGGAMFVGLMVGGVLADRYERKKVILLARGTCGIGFIGLCLNALLPEPSLLAIYLLGLWDGFFASLGVTALLAATPALVGRENLMQAGALTMLTVRLGSVISPMIGGLLLATGGVAWNYGLAAAGTFITLLPLLSLPALPPPPQPREHPLKSLLAGFRFLLASPLVGGIALLGGLLTMASAVRVLYPALADNWQMSAAEIGFLYAAIPLGAAIGALTSGKLAHSARPGLLMLLSTLGSFLAIGLFGLMPMWILGVVCLALFGWLSAVSSLLQYTMLQTQTPEAMLGRINGLWTAQNVTGDAIGAALLGGLGAMMTPVASASASGFGLLIIGVLLLLVLVELRRFRQTPPQVTASDS.

At 1–21 (MNKQSWLLNLSLLKTHPAFRA) the chain is on the cytoplasmic side. The helical transmembrane segment at 22-42 (VFLARFISIVSLGLLGVAVPV) threads the bilayer. Over 43–55 (QIQMMTHSTWQVG) the chain is Periplasmic. A helical membrane pass occupies residues 56–76 (LSVTLTGGAMFVGLMVGGVLA). Topologically, residues 77-83 (DRYERKK) are cytoplasmic. Residues 84-104 (VILLARGTCGIGFIGLCLNAL) traverse the membrane as a helical segment. The Periplasmic segment spans residues 105–109 (LPEPS). The chain crosses the membrane as a helical span at residues 110-130 (LLAIYLLGLWDGFFASLGVTA). At 131 to 156 (LLAATPALVGRENLMQAGALTMLTVR) the chain is on the cytoplasmic side. A helical transmembrane segment spans residues 157–177 (LGSVISPMIGGLLLATGGVAW). Residue asparagine 178 is a topological domain, periplasmic. The chain crosses the membrane as a helical span at residues 179–199 (YGLAAAGTFITLLPLLSLPAL). Residues 200–218 (PPPPQPREHPLKSLLAGFR) are Cytoplasmic-facing. The helical transmembrane segment at 219–239 (FLLASPLVGGIALLGGLLTMA) threads the bilayer. Residues 240-256 (SAVRVLYPALADNWQMS) are Periplasmic-facing. Residues 257–277 (AAEIGFLYAAIPLGAAIGALT) traverse the membrane as a helical segment. The Cytoplasmic portion of the chain corresponds to 278–287 (SGKLAHSARP). A helical membrane pass occupies residues 288–307 (GLLMLLSTLGSFLAIGLFGL). Residues 308-313 (MPMWIL) lie on the Periplasmic side of the membrane. The chain crosses the membrane as a helical span at residues 314–336 (GVVCLALFGWLSAVSSLLQYTML). Residues 337 to 356 (QTQTPEAMLGRINGLWTAQN) are Cytoplasmic-facing. Residues 357 to 377 (VTGDAIGAALLGGLGAMMTPV) form a helical membrane-spanning segment. A topological domain (periplasmic) is located at residue alanine 378. A helical membrane pass occupies residues 379-399 (SASASGFGLLIIGVLLLLVLV). At 400 to 416 (ELRRFRQTPPQVTASDS) the chain is on the cytoplasmic side.

Belongs to the major facilitator superfamily. EntS (TC 2.A.1.38) family.

The protein resides in the cell inner membrane. Component of an export pathway for enterobactin. This chain is Enterobactin exporter EntS, found in Shigella boydii serotype 18 (strain CDC 3083-94 / BS512).